A 781-amino-acid polypeptide reads, in one-letter code: AP-3 complex subunit beta (781 aa).

HEAT repeat units follow at residues 113–151 (PNLALLSINSIQRSLSDSNPDVRALALKTLSDINIASLY), 153–186 (IILHSLKKTVIDSSEVVRCQVAMTLLKLFKEQGI), 187–224 (SIKDDVMPMLKSLLADSEPSVVSAALLLFQKAFAQELQ), 294–332 (DHDLNLFLSSLKKLLHSPNAMVIVAVSKAFYQLSSPKTF), and 521–559 (PRICPDVLRRLLPQFSKEHAHVRLQILNLAAKLLSHDVD). 2 disordered regions span residues 694-713 (KPKRSASVSSVPSNTFTSSH) and 731-781 (ARQS…ETTE). Residues 699–712 (ASVSSVPSNTFTSS) show a composition bias toward polar residues. Positions 746–758 (STSEETDHTDDES) are enriched in acidic residues. The segment covering 759–774 (GSSSGDESTESSYVSS) has biased composition (low complexity).

Belongs to the adaptor complexes large subunit family. As to quaternary structure, adaptor protein complex 3 (AP-3) is a heterotetramer composed of 2 large adaptins (APL5 and APL6), a medium adaptin (APM3) and a small adaptin (APS3).

The protein resides in the golgi apparatus. It localises to the cytoplasmic vesicle. Its subcellular location is the clathrin-coated vesicle membrane. In terms of biological role, part of the AP-3 complex, an adaptor-related complex which is not clathrin-associated. The complex is associated with the Golgi region as well as more peripheral structures. It facilitates the budding of vesicles from the Golgi membrane and may be directly involved in trafficking to the vacuole. This Eremothecium gossypii (strain ATCC 10895 / CBS 109.51 / FGSC 9923 / NRRL Y-1056) (Yeast) protein is AP-3 complex subunit beta (APL6).